The chain runs to 432 residues: Negative regulator of systemic acquired resistance SNI1 (432 aa).

As to quaternary structure, interacts with SSN2. Binds to NTL9/CBNAC to promote its binding to promoters of target genes. Component of the SMC5-SMC6 complex which consists at least of SMC5 and SMC6B. Interacts with RAD17. In terms of tissue distribution, expressed at low levels in the veins.

It is found in the nucleus. Its function is as follows. Component of the SMC5-SMC6 complex, a complex involved in repair of DNA double-strand breaks by homologous recombination. Transcription repressor that prevents expression of pathogenesis-related genes (PR) via histone modifications and binding negative cis-acting elements at their promoters. Negative regulator of hypersensitive response (HR) and systemic acquired resistance (SAR) required to dampen the basal expression of pathogenesis related (PR) genes. Functions synergistically with NTL9/CBNAC as negative regulator of pathogen-induced PR1 expression and basal resistance to a virulent strain of P.syringae. Binds to the PR1 gene promoter to suppress defense response in the absence of pathogen challenge and is removed in response to induction. Negatively regulates both gene expression and DNA recombination during pathogen infection, thus being involved in short-term defense response and a long-term survival strategy. Prevents effective immune responses that involve activation of DNA damage responses, probably by negatively regulating the DNA damage sensors RAD17 and ATR. Negative regulator of defenses against the beet cyst nematode H.schachtii. The sequence is that of Negative regulator of systemic acquired resistance SNI1 from Arabidopsis thaliana (Mouse-ear cress).